A 98-amino-acid chain; its full sequence is Small ribosomal subunit protein eS24 (98 aa).

The protein belongs to the eukaryotic ribosomal protein eS24 family. As to quaternary structure, part of the 30S ribosomal subunit.

The chain is Small ribosomal subunit protein eS24 from Thermococcus kodakarensis (strain ATCC BAA-918 / JCM 12380 / KOD1) (Pyrococcus kodakaraensis (strain KOD1)).